We begin with the raw amino-acid sequence, 500 residues long: Probable malate:quinone oxidoreductase (500 aa).

Belongs to the MQO family. FAD serves as cofactor.

The catalysed reaction is (S)-malate + a quinone = a quinol + oxaloacetate. Its pathway is carbohydrate metabolism; tricarboxylic acid cycle; oxaloacetate from (S)-malate (quinone route): step 1/1. The polypeptide is Probable malate:quinone oxidoreductase (Bacillus cytotoxicus (strain DSM 22905 / CIP 110041 / 391-98 / NVH 391-98)).